The chain runs to 295 residues: Histamine N-methyltransferase (295 aa).

At A2 the chain carries Blocked amino end (Ala). Residue E28 coordinates substrate. Positions 60, 89, 94, 120, and 143 each coordinate S-adenosyl-L-methionine. Substrate is bound at residue N284.

It belongs to the class I-like SAM-binding methyltransferase superfamily. HNMT family. As to quaternary structure, monomer.

Its subcellular location is the cytoplasm. It catalyses the reaction histamine + S-adenosyl-L-methionine = N(tau)-methylhistamine + S-adenosyl-L-homocysteine + H(+). In terms of biological role, inactivates histamine by N-methylation. Plays an important role in degrading histamine and in regulating the airway response to histamine. This Rattus norvegicus (Rat) protein is Histamine N-methyltransferase (Hnmt).